A 209-amino-acid polypeptide reads, in one-letter code: Uracil phosphoribosyltransferase (209 aa).

5-phospho-alpha-D-ribose 1-diphosphate contacts are provided by residues R79, R104, and 131-139 (DPMLATGNS). Residues I194 and 199 to 201 (GDA) each bind uracil. Position 200 (D200) interacts with 5-phospho-alpha-D-ribose 1-diphosphate.

Belongs to the UPRTase family. It depends on Mg(2+) as a cofactor.

It catalyses the reaction UMP + diphosphate = 5-phospho-alpha-D-ribose 1-diphosphate + uracil. Its pathway is pyrimidine metabolism; UMP biosynthesis via salvage pathway; UMP from uracil: step 1/1. Allosterically activated by GTP. Its function is as follows. Catalyzes the conversion of uracil and 5-phospho-alpha-D-ribose 1-diphosphate (PRPP) to UMP and diphosphate. The chain is Uracil phosphoribosyltransferase from Polaromonas naphthalenivorans (strain CJ2).